A 436-amino-acid chain; its full sequence is Transcription termination factor Rho (436 aa).

A Rho RNA-BD domain is found at 65 to 140 (LVFVKGVLEI…IRMESVNGLP (76 aa)). ATP-binding positions include 185–190 (GKGQRG), 197–202 (KAGKTV), and Arg228.

It belongs to the Rho family. Homohexamer. The homohexamer assembles into an open ring structure.

Facilitates transcription termination by a mechanism that involves Rho binding to the nascent RNA, activation of Rho's RNA-dependent ATPase activity, and release of the mRNA from the DNA template. This chain is Transcription termination factor Rho, found in Aquifex aeolicus (strain VF5).